The chain runs to 346 residues: MAKALVLEKKGQLSLRDIPVRRDLSPTDVLIGIRTVGVCGSDVHYYTHGKIGPFVVNEPMILGHEAAGVVLEVGSQVRHLKKGDRVCMEPGIPDLSSRSSKLGIYNVDPSVRFWATPPVHGCLTPEVVHPAAFTYRLPDHVSFAEGAMVEPFAIGVQAALRAGIRPGDVGAVMGAGPIGMMTALAALAGGCSKVYVADLAQPKLDVIGAYEGIETINVRQQAVSEALAGATGGWGADVVFECSGAAPAILALPSLARPGGTVVLVGMPVEPVPFDIVGMQAKELRIETVFRYANVYDRAIELIASGKVDLKPLISATIPFDESIAAFDRAVEARPTDVKIQIEMPA.

Cys39, His64, and Glu150 together coordinate Zn(2+).

It belongs to the zinc-containing alcohol dehydrogenase family. Requires Zn(2+) as cofactor.

The catalysed reaction is xylitol + NAD(+) = D-xylulose + NADH + H(+). This chain is Putative D-xylulose reductase, found in Rhizobium meliloti (strain 1021) (Ensifer meliloti).